A 498-amino-acid chain; its full sequence is Peptidase inhibitor 16 (498 aa).

The N-terminal stretch at 1–29 (MHGSCSPWVMLPPPLLLLLLLIATGPTTA) is a signal peptide. The region spanning 39–167 (VDLHNQYRAQ…ANIHLLVCNY (129 aa)) is the SCP domain. N-linked (GlcNAc...) asparagine glycosylation occurs at Asn-116. 3 disordered regions span residues 204 to 277 (NPEK…GPSS), 317 to 407 (PKSM…SPLS), and 419 to 467 (ERGG…ENPE). Polar residues-rich tracts occupy residues 218-277 (VPST…GPSS) and 344-353 (LTESGESVPQ). Over residues 367-380 (PEAILPEAEAAPTE) the composition is skewed to low complexity. Positions 383–397 (VELREPEAESPKAES) are enriched in basic and acidic residues. A compositionally biased stretch (polar residues) spans 437–447 (SLPTFPSASGN). N-linked (GlcNAc...) asparagine glycosylation is present at Asn-447.

This sequence belongs to the CRISP family. In terms of assembly, interacts with PSP94/MSMB. In terms of processing, N-glycosylated. As to expression, expressed strongly in aorta and skin, and weakly in adipose tissue (at protein level). In heart, found in the extracellular space surrounding cardiomyocytes (at protein level).

It localises to the secreted. Its function is as follows. May inhibit cardiomyocyte growth. In Mus musculus (Mouse), this protein is Peptidase inhibitor 16 (Pi16).